The following is a 102-amino-acid chain: Putative protein p7 (102 aa).

In Escherichia coli (Bacteriophage APSE-1), this protein is Putative protein p7 (7).